Consider the following 321-residue polypeptide: Phospho-N-acetylmuramoyl-pentapeptide-transferase (321 aa).

10 helical membrane passes run 1–21, 50–70, 76–96, 112–132, 140–160, 173–193, 198–218, 225–245, 250–270, and 300–320; these read MVYL…PVLI, MGGL…IIFI, IILL…DDYI, FLAQ…FNLT, IPFI…IVFW, GLDG…AIMA, ATSI…FLPF, VFMG…ISIM, LSLL…MIQV, and VVTV…WIGV.

The protein belongs to the glycosyltransferase 4 family. MraY subfamily. The cofactor is Mg(2+).

The protein resides in the cell membrane. The catalysed reaction is UDP-N-acetyl-alpha-D-muramoyl-L-alanyl-gamma-D-glutamyl-L-lysyl-D-alanyl-D-alanine + di-trans,octa-cis-undecaprenyl phosphate = Mur2Ac(oyl-L-Ala-gamma-D-Glu-L-Lys-D-Ala-D-Ala)-di-trans,octa-cis-undecaprenyl diphosphate + UMP. It functions in the pathway cell wall biogenesis; peptidoglycan biosynthesis. Catalyzes the initial step of the lipid cycle reactions in the biosynthesis of the cell wall peptidoglycan: transfers peptidoglycan precursor phospho-MurNAc-pentapeptide from UDP-MurNAc-pentapeptide onto the lipid carrier undecaprenyl phosphate, yielding undecaprenyl-pyrophosphoryl-MurNAc-pentapeptide, known as lipid I. This is Phospho-N-acetylmuramoyl-pentapeptide-transferase from Staphylococcus saprophyticus subsp. saprophyticus (strain ATCC 15305 / DSM 20229 / NCIMB 8711 / NCTC 7292 / S-41).